The following is a 317-amino-acid chain: Transcription factor MYB35 (317 aa).

HTH myb-type domains lie at lysine 9–leucine 65 and lysine 66–leucine 116. 2 DNA-binding regions (H-T-H motif) span residues tryptophan 37–leucine 61 and tryptophan 89–leucine 112.

Inflorescences-specific. Accumulates in anthers, especially in tapetum and meiocytes/microsporocytes and microspores during anther development.

Its subcellular location is the nucleus. Functionally, required for anther development and early tapetal function during microspore maturation. Regulates callose dissolution required for microspores release from the tetrads. In Arabidopsis thaliana (Mouse-ear cress), this protein is Transcription factor MYB35.